The sequence spans 298 residues: Release factor glutamine methyltransferase (298 aa).

S-adenosyl-L-methionine-binding positions include 131 to 135, D162, W189, and N205; that span reads GTGTG. 205 to 208 provides a ligand contact to substrate; it reads NPPY.

Belongs to the protein N5-glutamine methyltransferase family. PrmC subfamily.

It carries out the reaction L-glutaminyl-[peptide chain release factor] + S-adenosyl-L-methionine = N(5)-methyl-L-glutaminyl-[peptide chain release factor] + S-adenosyl-L-homocysteine + H(+). In terms of biological role, methylates the class 1 translation termination release factors RF1/PrfA and RF2/PrfB on the glutamine residue of the universally conserved GGQ motif. This Pasteurella multocida (strain Pm70) protein is Release factor glutamine methyltransferase.